The sequence spans 212 residues: MAQAHRTPQPRAAPSQPRVFKLVLLGSGSVGKSSLALRYVKNDFKSILPTVGCAFFTKVVDVGATSLKLEIWDTAGQEKYHSVCHLYFRGANAALLVYDITRKDSFLKAQQWLKDLEEELHPGEVLVMLVGNKTDLSQEREVTFQEGKEFADSQKLLFMETSAKLNHQVSEVFNTVAQELLQRSDEEGQALRGDAAVALNKGPARQAKCCAH.

Phosphoserine is present on Ser29. 4 residues coordinate GTP: Gly31, Lys32, Ser33, and Thr50. Mg(2+) is bound by residues Ser33, Thr50, and Asp73. The Switch 1 motif lies at 43-54 (DFKSILPTVGCA). Positions 75-91 (AGQEKYHSVCHLYFRGA) match the Switch 2 motif. Residues Gly76, Asn132, Lys133, Asp135, and Ala163 each coordinate GTP. Residues Cys209 and Cys210 are each lipidated (S-geranylgeranyl cysteine).

The protein belongs to the small GTPase superfamily. Rab family. Mg(2+) serves as cofactor. Expressed in melanocytes (at protein level).

The protein localises to the recycling endosome membrane. It localises to the melanosome. It is found in the cell projection. Its subcellular location is the dendrite. It catalyses the reaction GTP + H2O = GDP + phosphate + H(+). Regulated by guanine nucleotide exchange factors (GEFs) which promote the exchange of bound GDP for free GTP. Regulated by GTPase activating proteins (GAPs) which increase the GTP hydrolysis activity. Inhibited by GDP dissociation inhibitors (GDIs). The small GTPases Rab are key regulators of intracellular membrane trafficking, from the formation of transport vesicles to their fusion with membranes. Rabs cycle between an inactive GDP-bound form and an active GTP-bound form that is able to recruit to membranes different set of downstream effectors directly responsible for vesicle formation, movement, tethering and fusion. RAB17 is involved in transcytosis, the directed movement of endocytosed material through the cell and its exocytosis from the plasma membrane at the opposite side. Mainly observed in epithelial cells, transcytosis mediates for instance, the transcellular transport of immunoglobulins from the basolateral surface to the apical surface. Most probably controls membrane trafficking through apical recycling endosomes in a post-endocytic step of transcytosis. Required for melanosome transport and release from melanocytes, it also regulates dendrite and dendritic spine development. May also play a role in cell migration. This is Ras-related protein Rab-17 from Homo sapiens (Human).